The chain runs to 459 residues: Siroheme synthase 2 (459 aa).

Residues Met-1 to Thr-204 form a precorrin-2 dehydrogenase /sirohydrochlorin ferrochelatase region. NAD(+)-binding positions include Glu-22–Ile-23 and Leu-43–Asp-44. Ser-128 carries the post-translational modification Phosphoserine. The tract at residues Gly-216–Ala-459 is uroporphyrinogen-III C-methyltransferase. Pro-225 serves as a coordination point for S-adenosyl-L-methionine. The active-site Proton acceptor is the Asp-248. Lys-270 functions as the Proton donor in the catalytic mechanism. S-adenosyl-L-methionine-binding positions include Gly-301–Asp-303, Ile-306, Thr-331–Ala-332, Met-382, and Gly-411.

In the N-terminal section; belongs to the precorrin-2 dehydrogenase / sirohydrochlorin ferrochelatase family. The protein in the C-terminal section; belongs to the precorrin methyltransferase family.

The catalysed reaction is uroporphyrinogen III + 2 S-adenosyl-L-methionine = precorrin-2 + 2 S-adenosyl-L-homocysteine + H(+). It carries out the reaction precorrin-2 + NAD(+) = sirohydrochlorin + NADH + 2 H(+). The enzyme catalyses siroheme + 2 H(+) = sirohydrochlorin + Fe(2+). The protein operates within cofactor biosynthesis; adenosylcobalamin biosynthesis; precorrin-2 from uroporphyrinogen III: step 1/1. It functions in the pathway cofactor biosynthesis; adenosylcobalamin biosynthesis; sirohydrochlorin from precorrin-2: step 1/1. It participates in porphyrin-containing compound metabolism; siroheme biosynthesis; precorrin-2 from uroporphyrinogen III: step 1/1. Its pathway is porphyrin-containing compound metabolism; siroheme biosynthesis; siroheme from sirohydrochlorin: step 1/1. The protein operates within porphyrin-containing compound metabolism; siroheme biosynthesis; sirohydrochlorin from precorrin-2: step 1/1. Multifunctional enzyme that catalyzes the SAM-dependent methylations of uroporphyrinogen III at position C-2 and C-7 to form precorrin-2 via precorrin-1. Then it catalyzes the NAD-dependent ring dehydrogenation of precorrin-2 to yield sirohydrochlorin. Finally, it catalyzes the ferrochelation of sirohydrochlorin to yield siroheme. This Pectobacterium atrosepticum (strain SCRI 1043 / ATCC BAA-672) (Erwinia carotovora subsp. atroseptica) protein is Siroheme synthase 2.